The sequence spans 147 residues: Mediator of RNA polymerase II transcription subunit 10 (147 aa).

Belongs to the Mediator complex subunit 10 family. As to quaternary structure, component of the Mediator complex.

The protein localises to the nucleus. In terms of biological role, component of the Mediator complex, a coactivator involved in the regulated transcription of nearly all RNA polymerase II-dependent genes. Mediator functions as a bridge to convey information from gene-specific regulatory proteins to the basal RNA polymerase II transcription machinery. Mediator is recruited to promoters by direct interactions with regulatory proteins and serves as a scaffold for the assembly of a functional preinitiation complex with RNA polymerase II and the general transcription factors. The chain is Mediator of RNA polymerase II transcription subunit 10 (NUT2) from Debaryomyces hansenii (strain ATCC 36239 / CBS 767 / BCRC 21394 / JCM 1990 / NBRC 0083 / IGC 2968) (Yeast).